Reading from the N-terminus, the 775-residue chain is Dipeptidyl peptidase 4 (775 aa).

Residues 1 to 15 (MKFLSLLLLAGIAQA) form the signal peptide. N-linked (GlcNAc...) asparagine glycosylation is found at N81, N111, N170, and N219. Active-site charge relay system residues include S613, D690, and H725.

It belongs to the peptidase S9B family.

It localises to the secreted. The catalysed reaction is Release of an N-terminal dipeptide, Xaa-Yaa-|-Zaa-, from a polypeptide, preferentially when Yaa is Pro, provided Zaa is neither Pro nor hydroxyproline.. Its function is as follows. Extracellular dipeptidyl-peptidase which removes N-terminal dipeptides sequentially from polypeptides having unsubstituted N-termini provided that the penultimate residue is proline. Contributes to pathogenicity. The sequence is that of Dipeptidyl peptidase 4 (DPP4) from Trichophyton equinum (Horse ringworm fungus).